Here is a 984-residue protein sequence, read N- to C-terminus: uncharacterized protein (984 aa).

Residues 941 to 984 (FGPSGPGPNQGPGDDYNNFKSTKYPRNGYNKYQPNNRIHSRNRY) are disordered.

Its subcellular location is the virion. This is an uncharacterized protein from Acanthamoeba polyphaga (Amoeba).